The primary structure comprises 49 residues: Large ribosomal subunit protein bL33B (49 aa).

The protein belongs to the bacterial ribosomal protein bL33 family.

The polypeptide is Large ribosomal subunit protein bL33B (Limosilactobacillus fermentum (strain NBRC 3956 / LMG 18251) (Lactobacillus fermentum)).